A 284-amino-acid polypeptide reads, in one-letter code: RNA polymerase sigma factor RpoH (284 aa).

The sigma-70 factor domain-2 stretch occupies residues L53–R122. The short motif at D77–Q80 is the Interaction with polymerase core subunit RpoC element. The sigma-70 factor domain-4 stretch occupies residues A228–L280. Positions L253–K272 form a DNA-binding region, H-T-H motif.

It belongs to the sigma-70 factor family. RpoH subfamily. In terms of assembly, interacts with the RNA polymerase core enzyme.

It localises to the cytoplasm. Functionally, sigma factors are initiation factors that promote the attachment of RNA polymerase to specific initiation sites and are then released. This sigma factor is involved in regulation of expression of heat shock genes. The protein is RNA polymerase sigma factor RpoH of Buchnera aphidicola subsp. Acyrthosiphon pisum (strain APS) (Acyrthosiphon pisum symbiotic bacterium).